A 366-amino-acid polypeptide reads, in one-letter code: Structure-specific endonuclease subunit SLX1 (366 aa).

One can recognise a GIY-YIG domain in the interval 14 to 95 (AFYCCYLLRS…QNTHATRHID (82 aa)). Disordered regions lie at residues 31–59 (IGST…SMQG) and 102–124 (RAEE…KRPP). Residues 109 to 123 (GKKKATSPGRRRKRP) are compositionally biased toward basic residues. The SLX1-type zinc-finger motif lies at 234 to 289 (CGVCKNPADMSSSLILVCPIEACQTVSHLSCLSNKFLTEGGELETLVPLEGTCPGC). The tract at residues 317–366 (KPKRKRKSDNPAESDAADGQALEQEDEELDETWMEDMSQDEEPSPVKKSR) is disordered. The segment covering 339–359 (EQEDEELDETWMEDMSQDEEP) has biased composition (acidic residues).

The protein belongs to the SLX1 family. Forms a heterodimer with SLX4. The cofactor is a divalent metal cation.

The protein resides in the nucleus. In terms of biological role, catalytic subunit of the SLX1-SLX4 structure-specific endonuclease that resolves DNA secondary structures generated during DNA repair and recombination. Has endonuclease activity towards branched DNA substrates, introducing single-strand cuts in duplex DNA close to junctions with ss-DNA. This is Structure-specific endonuclease subunit SLX1 from Phaeosphaeria nodorum (strain SN15 / ATCC MYA-4574 / FGSC 10173) (Glume blotch fungus).